The primary structure comprises 505 residues: Elsinochrome transporter 1 (505 aa).

Gly residues predominate over residues 1–10 (MALSGLGSGP). The tract at residues 1–25 (MALSGLGSGPEGNPNNHQGKAIPTL) is disordered. A helical transmembrane segment spans residues 35–55 (FLFSWVSFLVPFWSWYPFSPL). N-linked (GlcNAc...) asparagine glycosylation is found at Asn64 and Asn80. Residues 221–295 (DTPTGAGKPP…TEKGESLPLT (75 aa)) are disordered. Positions 255 to 267 (TPSSPDRSSSTNS) are enriched in low complexity. 6 helical membrane passes run 313–333 (VIFSGPTLVLGACYFCTFGAE), 348–368 (LGLGLQNAGNLAAIFGLLNIV), 391–411 (KALLHTYCVMTGVFCIAIGLA), 417–437 (ATLVGLVSGGLAFFLEGANGL), 449–469 (VVSGFTGACGNLGGIVFAIVF), and 479–499 (VFWIIGAIIIGLQVATCWIKP).

It belongs to the major facilitator superfamily. Nitrate/nitrite porter (TC 2.A.1.8) family.

The protein localises to the cell membrane. Its function is as follows. Major facilitator-type transporter; part of the gene cluster that mediates the biosynthesis of elsinochromes, pigments consisting of at least four interconvertible tautomers (A, B, C and D) that have a core phenolic quinone to which various side chains are attached and which play an important role in fungal pathogenesis. Once elsinochrome is synthesized, it must be exported outside the fungal cells, which is probably accomplished by the ECT1 transporter, to avoid toxicity. In Elsinoe fawcettii (Citrus scab fungus), this protein is Elsinochrome transporter 1.